Consider the following 190-residue polypeptide: Shikimate kinase (190 aa).

Residue 13 to 18 (GSGKTT) participates in ATP binding. Threonine 17 contributes to the Mg(2+) binding site. Positions 35, 59, and 81 each coordinate substrate. Arginine 119 serves as a coordination point for ATP. Arginine 138 is a binding site for substrate. Glutamine 155 lines the ATP pocket.

This sequence belongs to the shikimate kinase family. As to quaternary structure, monomer. The cofactor is Mg(2+).

Its subcellular location is the cytoplasm. It catalyses the reaction shikimate + ATP = 3-phosphoshikimate + ADP + H(+). It functions in the pathway metabolic intermediate biosynthesis; chorismate biosynthesis; chorismate from D-erythrose 4-phosphate and phosphoenolpyruvate: step 5/7. Functionally, catalyzes the specific phosphorylation of the 3-hydroxyl group of shikimic acid using ATP as a cosubstrate. The protein is Shikimate kinase of Nitrosococcus oceani (strain ATCC 19707 / BCRC 17464 / JCM 30415 / NCIMB 11848 / C-107).